The chain runs to 309 residues: tRNA uridine(34) hydroxylase (309 aa).

Residues Ser130 to Ser224 enclose the Rhodanese domain. Catalysis depends on Cys184, which acts as the Cysteine persulfide intermediate.

The protein belongs to the TrhO family.

The enzyme catalyses uridine(34) in tRNA + AH2 + O2 = 5-hydroxyuridine(34) in tRNA + A + H2O. Its function is as follows. Catalyzes oxygen-dependent 5-hydroxyuridine (ho5U) modification at position 34 in tRNAs. The sequence is that of tRNA uridine(34) hydroxylase from Rhizobium leguminosarum bv. trifolii (strain WSM2304).